Reading from the N-terminus, the 461-residue chain is Nuclear distribution protein PAC1 (461 aa).

Positions 64–93 (NSIIRLHRKILDLEQKCQQLTEELEAVPTE) form a coiled coil. 7 WD repeats span residues 118-157 (DVGA…MPLH), 161-203 (AHMK…AFQL), 209-252 (SHEH…KSFQ), 254-292 (HNQW…SMAV), 318-362 (DDQV…FIPH), 382-421 (GHTS…KVWP), and 423-461 (ASHG…VFMR).

Belongs to the WD repeat LIS1/nudF family. In terms of assembly, self-associates. Interacts with NDL1 and dynein.

Its subcellular location is the cytoplasm. It is found in the cytoskeleton. The protein resides in the spindle pole. Positively regulates the activity of the minus-end directed microtubule motor protein dynein. Plays a central role in positioning the mitotic spindle at the bud neck during cell division. Targets cytoplasmic dynein to microtubule plus ends, thereby promoting dynein-mediated microtubule sliding along the bud cortex and consequently the movement of the mitotic spindle to the bud neck. In Eremothecium gossypii (strain ATCC 10895 / CBS 109.51 / FGSC 9923 / NRRL Y-1056) (Yeast), this protein is Nuclear distribution protein PAC1.